A 252-amino-acid chain; its full sequence is Transmembrane ascorbate-dependent reductase CYB561 (252 aa).

Met-1 carries the N-acetylmethionine modification. Topologically, residues 1–17 (MEGPASPAPAPGALPYY) are cytoplasmic. A helical transmembrane segment spans residues 18 to 38 (VAFSQLLGLTVVAMTGAWLGM). Residues 20 to 221 (FSQLLGLTVV…FATVVLYILT (202 aa)) form the Cytochrome b561 domain. Over 39–52 (YRGGIAWESALQFN) the chain is Vesicular. A helical transmembrane segment spans residues 53–73 (VHPLCMVIGLVFLQGDALLVY). Residues His-54, Arg-74, and Lys-81 each coordinate heme b. Topologically, residues 74 to 86 (RVFRNEAKRTTKV) are cytoplasmic. The L-ascorbate site is built by Lys-81 and Lys-85. Residues 87-107 (LHGLLHVFAFVIALVGLVAVF) form a helical membrane-spanning segment. Heme b is bound by residues His-88, 117–120 (DLYS), and His-122. The Vesicular segment spans residues 108 to 125 (EHHRKKGYADLYSLHSWC). A helical membrane pass occupies residues 126–146 (GILVFALFFAQWLVGFSFFLF). The Cytoplasmic segment spans residues 147 to 159 (PGASFSLRSRYRP). Arg-154 contributes to the L-ascorbate binding site. Residues 160-180 (QHVFFGAAIFLLSVATALLGL) traverse the membrane as a helical segment. Residues His-161 and Glu-182 each coordinate heme b. Residues 181–199 (KEALLFELGTKYSTFEPEG) are Vesicular-facing. A helical membrane pass occupies residues 200–220 (VLANVLGLLLAAFATVVLYIL). Residues 221–252 (TRADWKRPLQAEEQALSMDFKTLTEGDSPSSQ) are Cytoplasmic-facing. Position 226 (Lys-226) interacts with heme b. Phosphoserine is present on residues Ser-248 and Ser-250.

It depends on heme b as a cofactor.

Its subcellular location is the cytoplasmic vesicle. The protein localises to the secretory vesicle. It is found in the chromaffin granule membrane. It catalyses the reaction monodehydro-L-ascorbate radical(out) + L-ascorbate(in) = monodehydro-L-ascorbate radical(in) + L-ascorbate(out). In terms of biological role, transmembrane reductase that uses ascorbate as an electron donor in the cytoplasm and transfers electrons across membranes to reduce monodehydro-L-ascorbate radical in the lumen of secretory vesicles. It is therefore involved the regeneration and homeostasis within secretory vesicles of ascorbate which in turn provides reducing equivalents needed to support the activity of intravesicular enzymes. The sequence is that of Transmembrane ascorbate-dependent reductase CYB561 (CYB561) from Ovis aries (Sheep).